A 261-amino-acid polypeptide reads, in one-letter code: Oxidoreductase ptaF (261 aa).

This sequence belongs to the avfA family.

It functions in the pathway secondary metabolite biosynthesis. Oxidoreductase; part of the gene cluster that mediates the biosynthesis of pestheic acid, a diphenyl ether which is a biosynthetic precursor of the unique chloropupukeananes. The biosynthesis initiates from condensation of acetate and malonate units catalyzed by the non-reducing PKS ptaA. As the ptaA protein is TE/CLC domain-deficient, hydrolysis and Claisen cyclization of the polyketide could be catalyzed by ptaB containing a beta-lactamase domain. The ptaB protein might hydrolyze the thioester bond between the ACP of ptaA and the intermediate to release atrochrysone carboxylic acid, which is spontaneously dehydrated to form endocrocin anthrone. Endocrocin anthrone is then converted to endocrocin, catalyzed by the anthrone oxygenase ptaC. Spontaneous decarboxylation of endocrocin occurs to generate emodin. An O-methyltransferase (ptaH or ptaI) could methylate emodin to form physcion. PtaJ could then catalyze the oxidative cleavage of physcion, and rotation of the intermediate could then afford desmethylisosulochrin. PtaF, a putative NADH-dependent oxidoreductase, might also participate in the oxidative cleavage step. Desmethylisosulochrin is then transformed by another O-methyltransferase (ptaH or ptaI) to form isosulochrin. Chlorination of isosulochrin by ptaM in the cyclohexadienone B ring then produces chloroisosulochrin. PtaE is responsible for the oxidative coupling reactions of both benzophenones isosulouchrin and chloroisosulochrin to RES-1214-1 and pestheic acid respectively, regardless of chlorination. The sequence is that of Oxidoreductase ptaF from Pestalotiopsis fici (strain W106-1 / CGMCC3.15140).